The chain runs to 509 residues: ATP synthase subunit alpha (509 aa).

An ATP-binding site is contributed by 169-176 (GDRQTGKT).

The protein belongs to the ATPase alpha/beta chains family. As to quaternary structure, F-type ATPases have 2 components, CF(1) - the catalytic core - and CF(0) - the membrane proton channel. CF(1) has five subunits: alpha(3), beta(3), gamma(1), delta(1), epsilon(1). CF(0) has four main subunits: a(1), b(1), b'(1) and c(9-12).

The protein localises to the cell inner membrane. The catalysed reaction is ATP + H2O + 4 H(+)(in) = ADP + phosphate + 5 H(+)(out). Functionally, produces ATP from ADP in the presence of a proton gradient across the membrane. The alpha chain is a regulatory subunit. In Bradyrhizobium sp. (strain BTAi1 / ATCC BAA-1182), this protein is ATP synthase subunit alpha.